The primary structure comprises 337 residues: Heat-inducible transcription repressor HrcA (337 aa).

The protein belongs to the HrcA family.

In terms of biological role, negative regulator of class I heat shock genes (grpE-dnaK-dnaJ and groELS operons). Prevents heat-shock induction of these operons. In Pseudarthrobacter chlorophenolicus (strain ATCC 700700 / DSM 12829 / CIP 107037 / JCM 12360 / KCTC 9906 / NCIMB 13794 / A6) (Arthrobacter chlorophenolicus), this protein is Heat-inducible transcription repressor HrcA.